We begin with the raw amino-acid sequence, 344 residues long: MKTATSYAAFLLSALAALPHASAHGFVSKVVVNGQSYAGNTPGGDTSPSPIRQISTISPVKGAANKDMFCGYDAQVASQVAAADPGSKVTFTWSGGGGQNWPHNTGPLMTYMGACEGTTCDKYTATDAKWFKIDEVGREANGGDWVQQEIMNGGTYTVTLPSNIAPGDYLIRHEIIALHLGMTEGGAEFYPSCTQVRITGNGSGTPNQTVSFPGAYSDTDPGIWDKNVYDPSAPYTFPGPPLSNLVSGDSGTVDGQGGSTSSATLSGGAAPTGTASGSTPAGTSQPSSTTGTGNAGANPSSGKCSLKSRAAPTTSGNLSANYPRHFSRVMKRLLNDFQTTVHQW.

The first 23 residues, 1 to 23, serve as a signal peptide directing secretion; that stretch reads MKTATSYAAFLLSALAALPHASA. Position 24 (H24) interacts with Cu(2+). C70 and C193 are disulfide-bonded. H179 contributes to the O2 binding site. Y190 is a Cu(2+) binding site. 2 N-linked (GlcNAc...) asparagine glycosylation sites follow: N201 and N207. Residues 240 to 321 form a disordered region; that stretch reads PPLSNLVSGD…PTTSGNLSAN (82 aa). Residues 259–292 are compositionally biased toward low complexity; the sequence is STSSATLSGGAAPTGTASGSTPAGTSQPSSTTGT. Polar residues predominate over residues 311-320; that stretch reads APTTSGNLSA. Residue N317 is glycosylated (N-linked (GlcNAc...) asparagine).

This sequence belongs to the polysaccharide monooxygenase AA9 family. Requires Cu(2+) as cofactor.

The protein localises to the secreted. It catalyses the reaction [(1-&gt;4)-beta-D-glucosyl]n+m + reduced acceptor + O2 = 4-dehydro-beta-D-glucosyl-[(1-&gt;4)-beta-D-glucosyl]n-1 + [(1-&gt;4)-beta-D-glucosyl]m + acceptor + H2O.. Functionally, lytic polysaccharide monooxygenase (LPMO) that depolymerizes crystalline and amorphous polysaccharides via the oxidation of scissile alpha- or beta-(1-4)-glycosidic bonds, yielding C1 or C4 oxidation products. Catalysis by LPMOs requires the reduction of the active-site copper from Cu(II) to Cu(I) by a reducing agent and H(2)O(2) or O(2) as a cosubstrate. This Gloeophyllum trabeum (strain ATCC 11539 / FP-39264 / Madison 617) (Brown rot fungus) protein is AA9 family lytic polysaccharide monooxygenase D.